The following is a 181-amino-acid chain: 28 kDa heat- and acid-stable phosphoprotein (181 aa).

The segment covering 1 to 14 (MPKGGRKGGHKGRV) has biased composition (basic residues). Positions 1 to 118 (MPKGGRKGGH…RREREEIEKQ (118 aa)) are disordered. Phosphothreonine is present on Thr18. Ser19 is subject to Phosphoserine. The span at 50–59 (DPKKEKKSLD) shows a compositional bias: basic and acidic residues. Residue Lys52 forms a Glycyl lysine isopeptide (Lys-Gly) (interchain with G-Cter in SUMO2) linkage. Phosphoserine occurs at positions 57, 60, and 63. Acidic residues predominate over residues 60–69 (SDESEDEDDD). A Phosphotyrosine modification is found at Tyr70. Basic and acidic residues predominate over residues 102–118 (DGPKELSRREREEIEKQ). Lys126 carries the N6-methyllysine modification. N6-acetyllysine occurs at positions 132 and 164. Residues 151-167 (EEAARKKEEERKAKDDA) are compositionally biased toward basic and acidic residues. Residues 151 to 181 (EEAARKKEEERKAKDDATLSGKRMQSLSLNK) are disordered. Ser176 and Ser178 each carry phosphoserine.

It belongs to the PDAP1 family. Phosphorylated by several kinases in vitro. In vivo, can be phosphorylated by CK2. Present in all tissues tested, including brain, lung, spleen, kidney, liver, heart, and muscle, in decreasing order of abundance.

The chain is 28 kDa heat- and acid-stable phosphoprotein (Pdap1) from Rattus norvegicus (Rat).